Here is a 365-residue protein sequence, read N- to C-terminus: tRNA-specific 2-thiouridylase MnmA (365 aa).

ATP is bound by residues 14 to 21 and Leu40; that span reads AMSGGVDS. Cys108 functions as the Nucleophile in the catalytic mechanism. The cysteines at positions 108 and 204 are disulfide-linked. Gly132 serves as a coordination point for ATP. An interaction with tRNA region spans residues 154–156; the sequence is KDQ. Catalysis depends on Cys204, which acts as the Cysteine persulfide intermediate.

This sequence belongs to the MnmA/TRMU family.

It localises to the cytoplasm. The enzyme catalyses S-sulfanyl-L-cysteinyl-[protein] + uridine(34) in tRNA + AH2 + ATP = 2-thiouridine(34) in tRNA + L-cysteinyl-[protein] + A + AMP + diphosphate + H(+). In terms of biological role, catalyzes the 2-thiolation of uridine at the wobble position (U34) of tRNA, leading to the formation of s(2)U34. This chain is tRNA-specific 2-thiouridylase MnmA, found in Rickettsia rickettsii (strain Iowa).